Here is a 207-residue protein sequence, read N- to C-terminus: Charged multivesicular body protein 3 (207 aa).

The interval 174–207 (QVSSAPLETHQQEEVVQEKQEDSELLDRLKALKS) is disordered. Residues 183-207 (HQQEEVVQEKQEDSELLDRLKALKS) adopt a coiled-coil conformation. Positions 183 to 207 (HQQEEVVQEKQEDSELLDRLKALKS) are enriched in basic and acidic residues.

The protein belongs to the SNF7 family. Probable core component of the endosomal sorting required for transport complex III (ESCRT-III).

Its subcellular location is the endosome membrane. Functionally, probable core component of the endosomal sorting required for transport complex III (ESCRT-III) which is involved in multivesicular bodies (MVBs) formation and sorting of endosomal cargo proteins into MVBs. MVBs contain intraluminal vesicles (ILVs) that are generated by invagination and scission from the limiting membrane of the endosome and are delivered to lysosomes enabling degradation of membrane proteins. The sequence is that of Charged multivesicular body protein 3 (chmp3) from Dictyostelium discoideum (Social amoeba).